A 659-amino-acid chain; its full sequence is Protein FAM161A (659 aa).

Positions Leu34 to Ala59 are disordered. Residues Tyr96–Lys120 are a coiled coil. Disordered stretches follow at residues Gly165–Val190 and Leu401–Ser428. Basic residues predominate over residues Gly408 to Lys426. Residues Ala531 to Lys557 are a coiled coil. Positions Asn594 to Ile659 are disordered. Positions Val600–Ser616 are enriched in basic and acidic residues. The segment covering Pro637 to Thr650 has biased composition (acidic residues).

Belongs to the FAM161 family.

The protein localises to the cytoplasm. Its subcellular location is the cytoskeleton. The protein resides in the cilium basal body. It localises to the cell projection. It is found in the cilium. The protein localises to the microtubule organizing center. Its subcellular location is the centrosome. The protein resides in the centriole. Its function is as follows. Involved in ciliogenesis. This is Protein FAM161A (fam161a) from Xenopus tropicalis (Western clawed frog).